A 508-amino-acid polypeptide reads, in one-letter code: 4-trimethylaminobutyraldehyde dehydrogenase A (508 aa).

Residues Lys-194 and 246–250 (GSVPT) contribute to the NAD(+) site. Catalysis depends on Glu-268, which acts as the Proton acceptor. Cys-302 serves as the catalytic Nucleophile. NAD(+) is bound at residue Glu-405.

Belongs to the aldehyde dehydrogenase family. Homotetramer.

It is found in the cytoplasm. Its subcellular location is the cytosol. It catalyses the reaction 4-(trimethylamino)butanal + NAD(+) + H2O = 4-(trimethylamino)butanoate + NADH + 2 H(+). The enzyme catalyses an aldehyde + NAD(+) + H2O = a carboxylate + NADH + 2 H(+). It participates in amine and polyamine biosynthesis; carnitine biosynthesis. In terms of biological role, converts gamma-trimethylaminobutyraldehyde into gamma-butyrobetaine with high efficiency (in vitro). Can catalyze the irreversible oxidation of a broad range of aldehydes to the corresponding acids in an NAD-dependent reaction, but with low efficiency. The chain is 4-trimethylaminobutyraldehyde dehydrogenase A (aldh9a1a) from Danio rerio (Zebrafish).